The chain runs to 522 residues: 3'3'-cGAMP-specific phosphodiesterase 2 (522 aa).

The region spanning 36-160 is the Response regulatory domain; that stretch reads CVLLVDDDEQ…QKLRTLLYSM (125 aa). Residue D91 is modified to 4-aspartylphosphate. The HD-GYP domain maps to 325 to 522; that stretch reads LRETSKELVY…FIAIRASLPD (198 aa). Residues H382 and D383 each coordinate a divalent metal cation. Catalysis depends on K386, which acts as the Proton donor. Residues H411, H437, H438, and D466 each coordinate a divalent metal cation.

Homodimer. It depends on Mn(2+) as a cofactor.

It catalyses the reaction 3',3'-cGAMP + H2O = 5'-pApG-3' + H(+). Functionally, phosphodiesterase (PDE) that catalyzes the hydrolysis of 3'3'-cyclic GMP-AMP (3'3'-cGAMP), leading to linear 5'-pApG. Counteracts the function of the 3'3'-cGAMP synthase DncV, and is involved in the modulation of intracellular 3'3'-cGAMP levels. Enhances bacterial chemotaxis and inhibits intestinal colonization in vivo. Thus exerts a crucial role in regulating bacterial infectivity through catalyzing 3'3'-cGAMP degradation. Is specific for 3'3'-cGAMP since it cannot degrade other cGAMP linkage isomers (3'2'-, 2'3'-, and 2'2'-cGAMPs). Is also able to hydrolyze c-di-GMP but not c-di-AMP. In Vibrio cholerae serotype O1 (strain ATCC 39315 / El Tor Inaba N16961), this protein is 3'3'-cGAMP-specific phosphodiesterase 2.